The chain runs to 447 residues: Chromosomal replication initiator protein DnaA (447 aa).

The segment at 1–66 is domain I, interacts with DnaA modulators; the sequence is MSNRIISILK…SKAIKEAYGK (66 aa). The tract at residues 66–102 is domain II; sequence KNLDYEIVYETTEPEAFNKSNESYKGPLVKKKPLLIS. Residues 103–319 form a domain III, AAA+ region region; it reads NLNANYTFEN…GVIIKLIVQS (217 aa). ATP is bound by residues Gly-146, Gly-148, Lys-149, and Thr-150. A domain IV, binds dsDNA region spans residues 320 to 447; the sequence is SINKERIGAA…NTMATSSAAG (128 aa).

It belongs to the DnaA family. Oligomerizes as a right-handed, spiral filament on DNA at oriC.

It is found in the cytoplasm. Functionally, plays an essential role in the initiation and regulation of chromosomal replication. ATP-DnaA binds to the origin of replication (oriC) to initiate formation of the DNA replication initiation complex once per cell cycle. Binds the DnaA box (a 9 base pair repeat at the origin) and separates the double-stranded (ds)DNA. Forms a right-handed helical filament on oriC DNA; dsDNA binds to the exterior of the filament while single-stranded (ss)DNA is stabiized in the filament's interior. The ATP-DnaA-oriC complex binds and stabilizes one strand of the AT-rich DNA unwinding element (DUE), permitting loading of DNA polymerase. After initiation quickly degrades to an ADP-DnaA complex that is not apt for DNA replication. Binds acidic phospholipids. This is Chromosomal replication initiator protein DnaA from Kosmotoga olearia (strain ATCC BAA-1733 / DSM 21960 / TBF 19.5.1).